The chain runs to 586 residues: Protein translocase subunit SecD (586 aa).

Helical transmembrane passes span 7 to 27 (LILI…TLKW), 418 to 438 (SALA…LSGV), 439 to 459 (VAGF…LSAF), 465 to 485 (LTSI…NIVI), 521 to 541 (TFIA…GFAW), and 546 to 566 (GIVA…EFII).

It belongs to the SecD/SecF family. SecD subfamily. As to quaternary structure, forms a complex with SecF. Part of the essential Sec protein translocation apparatus which comprises SecA, SecYEG and auxiliary proteins SecDF. Other proteins may also be involved.

The protein resides in the cell inner membrane. In terms of biological role, part of the Sec protein translocase complex. Interacts with the SecYEG preprotein conducting channel. SecDF uses the proton motive force (PMF) to complete protein translocation after the ATP-dependent function of SecA. The chain is Protein translocase subunit SecD from Borreliella burgdorferi (strain ATCC 35210 / DSM 4680 / CIP 102532 / B31) (Borrelia burgdorferi).